A 600-amino-acid chain; its full sequence is NAD-dependent malic enzyme, mitochondrial (600 aa).

Residues 1–68 (MTRTPFTLSL…NMPIAAPVRT (68 aa)) constitute a mitochondrion transit peptide. Arg-93 contributes to the fumarate binding site. The Proton donor role is filled by Tyr-138. Position 194 (Arg-194) interacts with (S)-malate. Arg-194 is a binding site for NAD(+). Lys-212 functions as the Proton acceptor in the catalytic mechanism. 3 residues coordinate a divalent metal cation: Glu-283, Asp-284, and Asp-307. Residues Gly-344 and Ala-347 each coordinate NAD(+). (S)-malate is bound by residues Asn-458 and Asn-502.

It belongs to the malic enzymes family. Requires Mg(2+) as cofactor. Mn(2+) serves as cofactor.

Its subcellular location is the mitochondrion matrix. The protein resides in the cytoplasm. It is found in the cytosol. The protein localises to the nucleus. The enzyme catalyses (S)-malate + NAD(+) = pyruvate + CO2 + NADH. It carries out the reaction oxaloacetate + H(+) = pyruvate + CO2. In terms of biological role, NAD-dependent mitochondrial malic enzyme that catalyzes the oxidative decarboxylation of malate to pyruvate. The chain is NAD-dependent malic enzyme, mitochondrial from Cryptococcus neoformans var. grubii serotype A (strain H99 / ATCC 208821 / CBS 10515 / FGSC 9487) (Filobasidiella neoformans var. grubii).